A 446-amino-acid chain; its full sequence is Exodeoxyribonuclease 7 large subunit (446 aa).

Belongs to the XseA family. As to quaternary structure, heterooligomer composed of large and small subunits.

The protein resides in the cytoplasm. It carries out the reaction Exonucleolytic cleavage in either 5'- to 3'- or 3'- to 5'-direction to yield nucleoside 5'-phosphates.. In terms of biological role, bidirectionally degrades single-stranded DNA into large acid-insoluble oligonucleotides, which are then degraded further into small acid-soluble oligonucleotides. The chain is Exodeoxyribonuclease 7 large subunit from Streptococcus pyogenes serotype M49 (strain NZ131).